Reading from the N-terminus, the 372-residue chain is Sulfate/thiosulfate import ATP-binding protein CysA (372 aa).

The 235-residue stretch at 3–237 folds into the ABC transporter domain; it reads IQVQHVTKRF…PATPFVYGFL (235 aa). 35–42 is a binding site for ATP; sequence GPSGCGKT.

It belongs to the ABC transporter superfamily. Sulfate/tungstate importer (TC 3.A.1.6) family. As to quaternary structure, the complex is composed of two ATP-binding proteins (CysA), two transmembrane proteins (CysT and CysW) and a solute-binding protein (CysP).

It localises to the cell inner membrane. It catalyses the reaction sulfate(out) + ATP + H2O = sulfate(in) + ADP + phosphate + H(+). The enzyme catalyses thiosulfate(out) + ATP + H2O = thiosulfate(in) + ADP + phosphate + H(+). Functionally, part of the ABC transporter complex CysAWTP involved in sulfate/thiosulfate import. Responsible for energy coupling to the transport system. This chain is Sulfate/thiosulfate import ATP-binding protein CysA, found in Ralstonia nicotianae (strain ATCC BAA-1114 / GMI1000) (Ralstonia solanacearum).